The chain runs to 375 residues: Chaperone protein DnaJ (375 aa).

Residues 5–70 (DYYEVLGVSR…EKRARYDRFG (66 aa)) enclose the J domain. A CR-type zinc finger spans residues 136–214 (GDEVTLRIPK…CRGAGQVQDI (79 aa)). Residues cysteine 149, cysteine 152, cysteine 166, cysteine 169, cysteine 188, cysteine 191, cysteine 202, and cysteine 205 each coordinate Zn(2+). CXXCXGXG motif repeat units follow at residues 149-156 (CPDCSGSG), 166-173 (CPQCGGSG), 188-195 (CSACRGEG), and 202-209 (CPRCRGAG).

Belongs to the DnaJ family. Homodimer. Requires Zn(2+) as cofactor.

It is found in the cytoplasm. Functionally, participates actively in the response to hyperosmotic and heat shock by preventing the aggregation of stress-denatured proteins and by disaggregating proteins, also in an autonomous, DnaK-independent fashion. Unfolded proteins bind initially to DnaJ; upon interaction with the DnaJ-bound protein, DnaK hydrolyzes its bound ATP, resulting in the formation of a stable complex. GrpE releases ADP from DnaK; ATP binding to DnaK triggers the release of the substrate protein, thus completing the reaction cycle. Several rounds of ATP-dependent interactions between DnaJ, DnaK and GrpE are required for fully efficient folding. Also involved, together with DnaK and GrpE, in the DNA replication of plasmids through activation of initiation proteins. In Oleidesulfovibrio alaskensis (strain ATCC BAA-1058 / DSM 17464 / G20) (Desulfovibrio alaskensis), this protein is Chaperone protein DnaJ.